We begin with the raw amino-acid sequence, 178 residues long: ATP-dependent protease subunit HslV (178 aa).

Thr-7 is an active-site residue. Na(+) is bound by residues Gly-162, Cys-165, and Thr-168.

This sequence belongs to the peptidase T1B family. HslV subfamily. A double ring-shaped homohexamer of HslV is capped on each side by a ring-shaped HslU homohexamer. The assembly of the HslU/HslV complex is dependent on binding of ATP.

It localises to the cytoplasm. It carries out the reaction ATP-dependent cleavage of peptide bonds with broad specificity.. With respect to regulation, allosterically activated by HslU binding. Protease subunit of a proteasome-like degradation complex believed to be a general protein degrading machinery. The chain is ATP-dependent protease subunit HslV from Paraburkholderia phymatum (strain DSM 17167 / CIP 108236 / LMG 21445 / STM815) (Burkholderia phymatum).